The sequence spans 350 residues: Galactokinase (350 aa).

15–18 is a substrate binding site; that stretch reads EHTD. ATP-binding positions include Ser-47 and 99-105; that span reads GAGLSSS. 2 residues coordinate Mg(2+): Ser-105 and Glu-137. Residue Asp-149 is the Proton acceptor of the active site. Tyr-198 is a binding site for substrate.

Belongs to the GHMP kinase family. GalK subfamily.

It localises to the cytoplasm. The catalysed reaction is alpha-D-galactose + ATP = alpha-D-galactose 1-phosphate + ADP + H(+). It functions in the pathway carbohydrate metabolism; galactose metabolism. In terms of biological role, catalyzes the transfer of the gamma-phosphate of ATP to D-galactose to form alpha-D-galactose-1-phosphate (Gal-1-P). The sequence is that of Galactokinase from Pyrococcus horikoshii (strain ATCC 700860 / DSM 12428 / JCM 9974 / NBRC 100139 / OT-3).